We begin with the raw amino-acid sequence, 437 residues long: ATP-dependent RNA helicase RhlB (437 aa).

A Q motif motif is present at residues 9 to 37 (QKFADLGLEPTVLEGLDAQGFHYCTPIQA). Positions 40 to 219 (LPVVLTGQDI…FEHMNSPESV (180 aa)) constitute a Helicase ATP-binding domain. Residue 53–60 (AQTGTGKT) participates in ATP binding. Residues 165 to 168 (DEAD) carry the DEAD box motif. The Helicase C-terminal domain occupies 245 to 390 (RLLQTLIEEE…LSKYNSEALL (146 aa)). Residues 395–437 (APLRLQRTPRQGGNRRPNGNRQGQGQSRPRNNNRRHPQSQKQQ) are disordered. Low complexity predominate over residues 400–424 (QRTPRQGGNRRPNGNRQGQGQSRPR). Residues 425-437 (NNNRRHPQSQKQQ) show a composition bias toward basic residues.

Belongs to the DEAD box helicase family. RhlB subfamily. In terms of assembly, component of the RNA degradosome, which is a multiprotein complex involved in RNA processing and mRNA degradation.

The protein resides in the cytoplasm. The catalysed reaction is ATP + H2O = ADP + phosphate + H(+). In terms of biological role, DEAD-box RNA helicase involved in RNA degradation. Has RNA-dependent ATPase activity and unwinds double-stranded RNA. The protein is ATP-dependent RNA helicase RhlB of Photobacterium profundum (strain SS9).